The following is a 651-amino-acid chain: Endo-1,4-beta-xylanase A (651 aa).

The N-terminal stretch at 1–30 is a signal peptide; sequence MKRKVKKMAAMATSIIMAIMIILHSIPVLA. Residues 33-227 enclose the GH11 domain; that stretch reads IIYDNETGTH…SSGYANVYKN (195 aa). Glu124 serves as the catalytic Nucleophile. Glu214 acts as the Proton donor in catalysis. CBM6 domains follow at residues 250-370, 387-507, and 527-647; these read SIIE…FIFS, SIIQ…FVFT, and SNIQ…FVFS. The Ca(2+) site is built by Glu253 and Glu255. A D-xylotriose-binding site is contributed by Thr270. Residue Arg275 participates in Ca(2+) binding. Repeat 1 spans residues 278-339; it reads GYIENGNTVT…SSTGSWNTYQ (62 aa). The tract at residues 278 to 616 is 3 X 61 AA approximate repeats; sequence GYIENGNTVT…GSTGSFDTYR (339 aa). D-xylotriose is bound by residues Tyr279, Asn336, and Asn363. D-xylobiose-binding residues include Tyr279, Asn336, and Asn363. Ca(2+) is bound at residue Asp365. Repeat 2 spans residues 415–476; that stretch reads GYIENGYSTT…PSTNSWDSYQ (62 aa). Ca(2+) contacts are provided by Gln530, Glu532, and Ser552. Repeat unit 3 spans residues 555-616; sequence GYIENGYSTT…GSTGSFDTYR (62 aa). D-xylotriose-binding residues include Tyr556, Asp613, and Asn640. Position 642 (Asp642) interacts with Ca(2+).

This sequence belongs to the glycosyl hydrolase 11 (cellulase G) family.

Its subcellular location is the secreted. The catalysed reaction is Endohydrolysis of (1-&gt;4)-beta-D-xylosidic linkages in xylans.. It functions in the pathway glycan degradation; xylan degradation. Its function is as follows. Endoxylanase that degrades arabinoxylan and glucuronoxylan to xylobiose and xylotriose (in vitro). The sequence is that of Endo-1,4-beta-xylanase A (xynA) from Thermoclostridium stercorarium (Clostridium stercorarium).